A 336-amino-acid polypeptide reads, in one-letter code: tRNA(Ile)-lysidine synthase (336 aa).

40–45 (SGGQDS) lines the ATP pocket.

The protein belongs to the tRNA(Ile)-lysidine synthase family.

Its subcellular location is the cytoplasm. It carries out the reaction cytidine(34) in tRNA(Ile2) + L-lysine + ATP = lysidine(34) in tRNA(Ile2) + AMP + diphosphate + H(+). Ligates lysine onto the cytidine present at position 34 of the AUA codon-specific tRNA(Ile) that contains the anticodon CAU, in an ATP-dependent manner. Cytidine is converted to lysidine, thus changing the amino acid specificity of the tRNA from methionine to isoleucine. The protein is tRNA(Ile)-lysidine synthase of Prochlorococcus marinus (strain SARG / CCMP1375 / SS120).